We begin with the raw amino-acid sequence, 235 residues long: uncharacterized protein (235 aa).

2 disordered regions span residues 1–36 (MGML…GRGS) and 213–235 (VKTR…ILEQ).

This is an uncharacterized protein from Homo sapiens (Human).